A 354-amino-acid chain; its full sequence is Uroporphyrinogen decarboxylase (354 aa).

Residues arginine 35–arginine 39, aspartate 84, tyrosine 159, serine 214, and histidine 333 each bind substrate.

It belongs to the uroporphyrinogen decarboxylase family. In terms of assembly, homodimer.

It is found in the cytoplasm. It carries out the reaction uroporphyrinogen III + 4 H(+) = coproporphyrinogen III + 4 CO2. It functions in the pathway porphyrin-containing compound metabolism; protoporphyrin-IX biosynthesis; coproporphyrinogen-III from 5-aminolevulinate: step 4/4. Catalyzes the decarboxylation of four acetate groups of uroporphyrinogen-III to yield coproporphyrinogen-III. This Nocardia farcinica (strain IFM 10152) protein is Uroporphyrinogen decarboxylase.